Here is a 143-residue protein sequence, read N- to C-terminus: Large ribosomal subunit protein uL11 (143 aa).

The protein belongs to the universal ribosomal protein uL11 family. In terms of assembly, part of the ribosomal stalk of the 50S ribosomal subunit. Interacts with L10 and the large rRNA to form the base of the stalk. L10 forms an elongated spine to which L12 dimers bind in a sequential fashion forming a multimeric L10(L12)X complex. One or more lysine residues are methylated.

Forms part of the ribosomal stalk which helps the ribosome interact with GTP-bound translation factors. This is Large ribosomal subunit protein uL11 from Rhizobium rhizogenes (strain K84 / ATCC BAA-868) (Agrobacterium radiobacter).